Here is a 150-residue protein sequence, read N- to C-terminus: Large ribosomal subunit protein uL13 (150 aa).

The tract at residues 128–150 (GSDHPHSAQEPKILSLNSESVTK) is disordered.

It belongs to the universal ribosomal protein uL13 family. Part of the 50S ribosomal subunit.

This protein is one of the early assembly proteins of the 50S ribosomal subunit, although it is not seen to bind rRNA by itself. It is important during the early stages of 50S assembly. The sequence is that of Large ribosomal subunit protein uL13 from Prochlorococcus marinus (strain NATL1A).